Here is a 435-residue protein sequence, read N- to C-terminus: uncharacterized protein (435 aa).

The F-box domain maps to 7–58 (PFPITKLPLVPRCKILKFFDYGDLLDISLCSKRMAQTVRDIHITADLHYLTL).

This is an uncharacterized protein from Caenorhabditis elegans.